We begin with the raw amino-acid sequence, 339 residues long: Ferrochelatase (339 aa).

H202 and E283 together coordinate Fe cation.

This sequence belongs to the ferrochelatase family.

The protein localises to the cytoplasm. It carries out the reaction heme b + 2 H(+) = protoporphyrin IX + Fe(2+). It participates in porphyrin-containing compound metabolism; protoheme biosynthesis; protoheme from protoporphyrin-IX: step 1/1. Catalyzes the ferrous insertion into protoporphyrin IX. The protein is Ferrochelatase of Psychrobacter arcticus (strain DSM 17307 / VKM B-2377 / 273-4).